Reading from the N-terminus, the 217-residue chain is Protein-L-isoaspartate O-methyltransferase (217 aa).

Residue serine 67 is part of the active site.

The protein belongs to the methyltransferase superfamily. L-isoaspartyl/D-aspartyl protein methyltransferase family.

The protein localises to the cytoplasm. It carries out the reaction [protein]-L-isoaspartate + S-adenosyl-L-methionine = [protein]-L-isoaspartate alpha-methyl ester + S-adenosyl-L-homocysteine. Functionally, catalyzes the methyl esterification of L-isoaspartyl residues in peptides and proteins that result from spontaneous decomposition of normal L-aspartyl and L-asparaginyl residues. It plays a role in the repair and/or degradation of damaged proteins. This is Protein-L-isoaspartate O-methyltransferase from Azoarcus sp. (strain BH72).